The chain runs to 242 residues: MKRLLAISSLTLLASLVLLVVSPARSLAAQDEVTVVDALADAADSEDGDHDHDHEGDDHGHDEAAGDEHGHGDGDHAATPLLSFDGGSAIWNLIIFLCVLAILSKFVWPAVLGGLQAREEKIREDLESAEKASAEAKQMLSDYQLKLDEAASQVQTMLADARRDAEANGQKIVDAAKVEAAAQRERALSDIENAKKVAMAEMAGQTSKLAMQVARSVVGRELSADDHADLIRQSMERLPSQN.

The helical transmembrane segment at 4–24 threads the bilayer; the sequence is LLAISSLTLLASLVLLVVSPA. Residues 43–74 form a disordered region; it reads ADSEDGDHDHDHEGDDHGHDEAAGDEHGHGDG. Residues 49–74 are compositionally biased toward basic and acidic residues; it reads DHDHDHEGDDHGHDEAAGDEHGHGDG.

The protein belongs to the ATPase B chain family. As to quaternary structure, F-type ATPases have 2 components, F(1) - the catalytic core - and F(0) - the membrane proton channel. F(1) has five subunits: alpha(3), beta(3), gamma(1), delta(1), epsilon(1). F(0) has three main subunits: a(1), b(2) and c(10-14). The alpha and beta chains form an alternating ring which encloses part of the gamma chain. F(1) is attached to F(0) by a central stalk formed by the gamma and epsilon chains, while a peripheral stalk is formed by the delta and b chains.

The protein localises to the cell inner membrane. Its function is as follows. F(1)F(0) ATP synthase produces ATP from ADP in the presence of a proton or sodium gradient. F-type ATPases consist of two structural domains, F(1) containing the extramembraneous catalytic core and F(0) containing the membrane proton channel, linked together by a central stalk and a peripheral stalk. During catalysis, ATP synthesis in the catalytic domain of F(1) is coupled via a rotary mechanism of the central stalk subunits to proton translocation. Component of the F(0) channel, it forms part of the peripheral stalk, linking F(1) to F(0). In Rhodopirellula baltica (strain DSM 10527 / NCIMB 13988 / SH1), this protein is ATP synthase subunit b 2.